Reading from the N-terminus, the 133-residue chain is Bacteriohemerythrin (133 aa).

Fe cation is bound by residues His-19, His-56, Glu-60, His-75, His-79, His-115, and Asp-120.

The protein belongs to the hemerythrin family. As to quaternary structure, monomer.

Oxygen-binding protein. May be involved in a storage mechanism or for delivery to oxygen-requiring enzymes. The oxygen-binding site contains two iron atoms. The protein is Bacteriohemerythrin of Campylobacter jejuni subsp. jejuni serotype O:23/36 (strain 81-176).